The chain runs to 184 residues: Protein Syd (184 aa).

It belongs to the Syd family.

The protein resides in the cell inner membrane. Interacts with the SecY protein in vivo. May bind preferentially to an uncomplexed state of SecY, thus functioning either as a chelating agent for excess SecY in the cell or as a regulatory factor that negatively controls the translocase function. This chain is Protein Syd, found in Photorhabdus laumondii subsp. laumondii (strain DSM 15139 / CIP 105565 / TT01) (Photorhabdus luminescens subsp. laumondii).